The following is a 737-amino-acid chain: Angiotensin-converting enzyme-like protein Ace3 (737 aa).

The N-terminal stretch at 1–23 (MNLPWALLLVLLSHRQLLPWLRT) is a signal peptide. The Extracellular segment spans residues 24–639 (VGETSLNDFY…TDTEPEQAYL (616 aa)). In terms of domain architecture, Peptidase M2 spans 32-611 (FYSEAQAKLF…VKQGDTLGWP (580 aa)). An intrachain disulfide couples C146 to C152. Residues R180 and Y218 each coordinate chloride. An intrachain disulfide couples C346 to C364. Positions 377 and 381 each coordinate Zn(2+). N-linked (GlcNAc...) asparagine glycosylation is present at N390. E405 contributes to the Zn(2+) binding site. The chloride site is built by W479, R483, and R516. A disulfide bridge connects residues C532 and C544. A helical transmembrane segment spans residues 640–660 (GQWVLLSMSFFMLVLILALGF). Residues 661-700 (RLHYLEKQLLDEDTMILKTLPYSYFLGIAMEPHQAARKQW) lie on the Cytoplasmic side of the membrane. The chain crosses the membrane as a helical span at residues 701 to 721 (LLLGLCCILMLCCIGLLIRIV). Over 722 to 737 (TQNTENTPWMKNEGQS) the chain is Extracellular.

Belongs to the peptidase M2 family. In terms of assembly, interacts with IZUMO1. Requires Zn(2+) as cofactor. As to expression, expressed in sperm and testis (at protein level). Expressed in heart and testis. Not detected in kidney, lung, liver, brain, ovary, spleen and thymus.

The protein localises to the cytoplasmic vesicle. It localises to the secretory vesicle. The protein resides in the acrosome membrane. The protein is Angiotensin-converting enzyme-like protein Ace3 of Mus musculus (Mouse).